A 184-amino-acid chain; its full sequence is Tumor necrosis factor receptor superfamily member 17 (184 aa).

Topologically, residues 1–54 (MLQMAGQCSQNEYFDSLLHACIPCQLRCSSNTPPLTCQRYCNASVTNSVKGTNA) are extracellular. The TNFR-Cys repeat unit spans residues 7–41 (QCSQNEYFDSLLHACIPCQLRCSSNTPPLTCQRYC). 3 cysteine pairs are disulfide-bonded: Cys8–Cys21, Cys24–Cys37, and Cys28–Cys41. Residues 55 to 77 (ILWTCLGLSLIISLAVFVLMFLL) form a helical; Signal-anchor for type III membrane protein membrane-spanning segment. The Cytoplasmic portion of the chain corresponds to 78 to 184 (RKINSEPLKD…TEIEKSISAR (107 aa)).

In terms of assembly, associates with TRAF1, TRAF2, TRAF3, TRAF5 and TRAF6. In terms of tissue distribution, expressed in mature B-cells, but not in T-cells or monocytes.

It is found in the cell membrane. Its subcellular location is the endomembrane system. Its function is as follows. Receptor for TNFSF13B/BLyS/BAFF and TNFSF13/APRIL. Promotes B-cell survival and plays a role in the regulation of humoral immunity. Activates NF-kappa-B and JNK. The protein is Tumor necrosis factor receptor superfamily member 17 (TNFRSF17) of Homo sapiens (Human).